Consider the following 560-residue polypeptide: Digoxin reductase (560 aa).

The tat-type signal signal peptide spans 1–48 (MEYGKCRGIERGMGRRDFLKAATLLGATAAGAGMLAGCAPKSASEAQA).

This sequence belongs to the FAD-dependent oxidoreductase 2 family. In terms of assembly, may form a membrane-associated complex with Cgr1. The cofactor is FAD. It depends on [4Fe-4S] cluster as a cofactor. Predicted to be exported by the Tat system. The position of the signal peptide cleavage has not been experimentally proven.

It is found in the cell membrane. The catalysed reaction is digoxin + 2 Fe(II)-[cytochrome c] + 3 H(+) = dihydrodigoxin + 2 Fe(III)-[cytochrome c]. It catalyses the reaction digitoxin + 2 Fe(II)-[cytochrome c] + 3 H(+) = dihydrodigitoxin + 2 Fe(III)-[cytochrome c]. It carries out the reaction digoxigenin + 2 Fe(II)-[cytochrome c] + 3 H(+) = dihydrodigoxigenin + 2 Fe(III)-[cytochrome c]. The enzyme catalyses ouabain + 2 Fe(II)-[cytochrome c] + 3 H(+) = dihydroouabain + 2 Fe(III)-[cytochrome c]. The catalysed reaction is ouabagenin + 2 Fe(II)-[cytochrome c] + 3 H(+) = dihydroouabagenin + 2 Fe(III)-[cytochrome c]. Involved in the inactivation of the cardiac medication and plant natural product digoxin, thus decreasing drug efficacy and toxicity. Catalyzes the reduction of the alpha,beta-unsaturated butyrolactone ring of digoxin to the inactive metabolite dihydrodigoxin. Likely uses the cytochrome Cgr1 as the physiological electron donor, encoded by the adjacent gene in the locus. Only reduces digoxin and other cardenolide toxins, such as digitoxin, digoxigenin, ouabain and ouabagenin. Therefore is a specialized enzyme present in some gut bacteria E.lenta that protects their human host against ingested plant toxins. This chain is Digoxin reductase, found in Eggerthella lenta (strain ATCC 25559 / DSM 2243 / CCUG 17323 / JCM 9979 / KCTC 3265 / NCTC 11813 / VPI 0255 / 1899 B) (Eubacterium lentum).